A 422-amino-acid chain; its full sequence is UDP-N-acetylglucosamine 1-carboxyvinyltransferase (422 aa).

22-23 (KN) provides a ligand contact to phosphoenolpyruvate. Arg93 is a binding site for UDP-N-acetyl-alpha-D-glucosamine. Cys117 serves as the catalytic Proton donor. A 2-(S-cysteinyl)pyruvic acid O-phosphothioketal modification is found at Cys117. Residues 122 to 126 (RPVDL), Asp308, and Leu330 each bind UDP-N-acetyl-alpha-D-glucosamine.

Belongs to the EPSP synthase family. MurA subfamily.

It is found in the cytoplasm. It catalyses the reaction phosphoenolpyruvate + UDP-N-acetyl-alpha-D-glucosamine = UDP-N-acetyl-3-O-(1-carboxyvinyl)-alpha-D-glucosamine + phosphate. Its pathway is cell wall biogenesis; peptidoglycan biosynthesis. Functionally, cell wall formation. Adds enolpyruvyl to UDP-N-acetylglucosamine. This Helicobacter pylori (strain P12) protein is UDP-N-acetylglucosamine 1-carboxyvinyltransferase.